The sequence spans 416 residues: MPKTKLTSPPFKILKCTECDACINVPSILQSNEQAECPRCHHLLASGTRWSLHRCAMIALSILILMPFSLNYPLLSLHLLGIKIDASIWDGIWKMAVGGYEYTAFMIFICAVVMPITFALLVIMLWLAKIFQIKPRSVLLFLGYIKAWVMFDVYLVALGVTIFKVREYATLEINIYLIPFIFTALLTTLLFIKLNLSALWQEFYPECTSVYTKQAVELCPACHYTFTQKSIHYDHQQKICCPRCQSPLNTSDKLKLQATWATLIAGIIMLFPANLLPISGIYLTGALSEDTLISGVISFVKSGSYFVAFVVFFASIFVPISKIFIMLYLLACVHFKWQHSIKWQMRLLHLVHFVGRWSMLDLFVLALMMSLVTRGEIINFTVGPGAFYFGAAVFCTMLSTSQFDSKLIWKIYDREK.

8 consecutive transmembrane segments (helical) span residues 62 to 82, 107 to 127, 138 to 158, 172 to 192, 263 to 283, 306 to 326, 347 to 367, and 377 to 397; these read ILILMPFSLNYPLLSLHLLGI, IFICAVVMPITFALLVIMLWL, VLLFLGYIKAWVMFDVYLVAL, EINIYLIPFIFTALLTTLLFI, LIAGIIMLFPANLLPISGIYL, FVAFVVFFASIFVPISKIFIM, LLHLVHFVGRWSMLDLFVLAL, and IINFTVGPGAFYFGAAVFCTM.

Belongs to the PqiA family.

The protein resides in the cell inner membrane. The chain is Probable intermembrane transport protein HI_1671 from Haemophilus influenzae (strain ATCC 51907 / DSM 11121 / KW20 / Rd).